Consider the following 137-residue polypeptide: uncharacterized protein (137 aa).

A helical transmembrane segment spans residues 116 to 136 (YLSIANLATLLLFGIIGLSII).

The protein resides in the host membrane. This is an uncharacterized protein from His1 virus (isolate Australia/Victoria) (His1V).